A 20-amino-acid polypeptide reads, in one-letter code: Collagenolytic protease 35 kDa 2 (20 aa).

Positions 1 to 20 constitute a Peptidase S1 domain; the sequence is IVGGTEVTPGEIPYQLSFQD. The tract at residues 1-20 is disordered; that stretch reads IVGGTEVTPGEIPYQLSFQD.

The protein belongs to the peptidase S1 family.

The catalysed reaction is Hydrolysis of proteins, with broad specificity for peptide bonds. Native collagen is cleaved about 75% of the length of the molecule from the N-terminus. Low activity on small molecule substrates of both trypsin and chymotrypsin.. This enzyme is a serine protease capable of degrading the native triple helix of collagen. The chain is Collagenolytic protease 35 kDa 2 from Chionoecetes opilio (Atlantic snow crab).